Consider the following 114-residue polypeptide: Fatty acid-binding protein, liver (114 aa).

Belongs to the calycin superfamily. Fatty-acid binding protein (FABP) family. In terms of processing, the N-terminus is blocked.

The protein localises to the cytoplasm. FABPs are thought to play a role in the intracellular transport of long-chain fatty acids and their acyl-CoA esters. This chain is Fatty acid-binding protein, liver, found in Lethenteron camtschaticum (Japanese lamprey).